We begin with the raw amino-acid sequence, 507 residues long: Lysine--tRNA ligase (507 aa).

Mg(2+) is bound by residues glutamate 416 and glutamate 423.

The protein belongs to the class-II aminoacyl-tRNA synthetase family. In terms of assembly, homodimer. Requires Mg(2+) as cofactor.

It is found in the cytoplasm. The catalysed reaction is tRNA(Lys) + L-lysine + ATP = L-lysyl-tRNA(Lys) + AMP + diphosphate. This Hahella chejuensis (strain KCTC 2396) protein is Lysine--tRNA ligase.